The sequence spans 296 residues: tRNA-cytidine(32) 2-sulfurtransferase (296 aa).

A PP-loop motif motif is present at residues 72-77; the sequence is SGGKDS. Residues Cys147, Cys150, and Cys238 each contribute to the [4Fe-4S] cluster site.

Belongs to the TtcA family. In terms of assembly, homodimer. It depends on Mg(2+) as a cofactor. Requires [4Fe-4S] cluster as cofactor.

Its subcellular location is the cytoplasm. The catalysed reaction is cytidine(32) in tRNA + S-sulfanyl-L-cysteinyl-[cysteine desulfurase] + AH2 + ATP = 2-thiocytidine(32) in tRNA + L-cysteinyl-[cysteine desulfurase] + A + AMP + diphosphate + H(+). Its pathway is tRNA modification. Catalyzes the ATP-dependent 2-thiolation of cytidine in position 32 of tRNA, to form 2-thiocytidine (s(2)C32). The sulfur atoms are provided by the cysteine/cysteine desulfurase (IscS) system. This is tRNA-cytidine(32) 2-sulfurtransferase from Sinorhizobium fredii (strain NBRC 101917 / NGR234).